The sequence spans 649 residues: MFEIKARDAMGRLGSITINGKKIETPTIMPVIHPNPKKQTVSMDLINKMADVVITNSYITYTTPELREIAETKGIHELIDFKNVVVTDSGSFQLSVYGDVNVGPMEIIDFQEKIGVDVGTILDIPTGPDVSREKAESDLIETFKRAEDSIKRRKEMGYKLALNGTIQGSKYLDLRQKSAEVMGKMDFDIYPIGAVVPLMEDYRYREVAEVILNSKMHLPTNKPVHLFGCGHPMLFALSVALGCDLFDSAAYALYAKNGRYLTADGTLHLEDMKDLKSFPCTCKVCSEYTPKQLYNLEEKEKTRLLAEHNLYVTFEEIDRIKNAIKEGNLWELVEERCRSHPKLLNGLRVISKYMDFIEKHDPVSKKSGFFYTGYESMNRPEIYRHKQRLDRIQYDKIYVTSVSENTSKPYHENLSNVPCDVDVLIKDGVFGLVPLNIDTMYPLAQNEVPDLYDFEKKYNNEFVSEFKEKHSEKILDISTYNYYINHYGKKKECDKINPDVFRVGKMLEYQYGAKILDEELMEKVKTRRSKNTGRIRNLLLEKEVLFTLRANDNFLIPAKSGAELLHEKLEFPKYRIVIDSSVEEYARAGKSVYSKFVKDCDPELRPFEEVLVVNSDDELLAYGTTILNGRELMEFDYGVAVTLRGGLKK.

The active-site Nucleophile is D88. Residues D123 and A194 each contribute to the substrate site. C280, C282, and C285 together coordinate Zn(2+). In terms of domain architecture, PUA spans K573–K648.

The protein belongs to the archaeosine tRNA-ribosyltransferase family. Requires Zn(2+) as cofactor.

The catalysed reaction is guanosine(15) in tRNA + 7-cyano-7-deazaguanine = 7-cyano-7-carbaguanosine(15) in tRNA + guanine. Its pathway is tRNA modification; archaeosine-tRNA biosynthesis. Its function is as follows. Exchanges the guanine residue with 7-cyano-7-deazaguanine (preQ0) at position 15 in the dihydrouridine loop (D-loop) of archaeal tRNAs. The polypeptide is tRNA-guanine(15) transglycosylase (Methanococcus maripaludis (strain C7 / ATCC BAA-1331)).